We begin with the raw amino-acid sequence, 106 residues long: Malonate decarboxylase acyl carrier protein (106 aa).

Ser28 is modified (O-(phosphoribosyl dephospho-coenzyme A)serine).

This sequence belongs to the MdcC family. In terms of processing, covalently binds the prosthetic group of malonate decarboxylase.

Its subcellular location is the cytoplasm. Subunit of malonate decarboxylase, it is an acyl carrier protein to which acetyl and malonyl thioester residues are bound via a 2'-(5''-phosphoribosyl)-3'-dephospho-CoA prosthetic group and turn over during the catalytic mechanism. The chain is Malonate decarboxylase acyl carrier protein from Stenotrophomonas maltophilia (strain R551-3).